Here is a 459-residue protein sequence, read N- to C-terminus: Putrescine aminotransferase (459 aa).

Pyridoxal 5'-phosphate contacts are provided by residues 150-151 (GT) and Gln274. Lys300 bears the N6-(pyridoxal phosphate)lysine mark. Thr332 lines the pyridoxal 5'-phosphate pocket.

Belongs to the class-III pyridoxal-phosphate-dependent aminotransferase family. Putrescine aminotransferase subfamily. The cofactor is pyridoxal 5'-phosphate.

It carries out the reaction an alkane-alpha,omega-diamine + 2-oxoglutarate = an omega-aminoaldehyde + L-glutamate. It catalyses the reaction putrescine + 2-oxoglutarate = 1-pyrroline + L-glutamate + H2O. The catalysed reaction is cadaverine + 2-oxoglutarate = 5-aminopentanal + L-glutamate. Its pathway is amine and polyamine degradation; putrescine degradation; 4-aminobutanal from putrescine (transaminase route): step 1/1. In terms of biological role, catalyzes the aminotransferase reaction from putrescine to 2-oxoglutarate, leading to glutamate and 4-aminobutanal, which spontaneously cyclizes to form 1-pyrroline. This is the first step in one of two pathways for putrescine degradation, where putrescine is converted into 4-aminobutanoate (gamma-aminobutyrate or GABA) via 4-aminobutanal. Also functions as a cadaverine transaminase in a a L-lysine degradation pathway to succinate that proceeds via cadaverine, glutarate and L-2-hydroxyglutarate. The sequence is that of Putrescine aminotransferase from Salmonella paratyphi B (strain ATCC BAA-1250 / SPB7).